The primary structure comprises 322 residues: Corticotropin-releasing factor-binding protein (322 aa).

Residues 1–24 (MSPNFKLQCHFILILLTALRGESR) form the signal peptide. 5 cysteine pairs are disulfide-bonded: Cys60/Cys81, Cys104/Cys141, Cys183/Cys205, Cys237/Cys264, and Cys277/Cys318. Residue Asn204 is glycosylated (N-linked (GlcNAc...) asparagine).

Belongs to the CRF-binding protein family.

The protein localises to the secreted. Its function is as follows. Binds CRF and inactivates it. May prevent inappropriate pituitary-adrenal stimulation in pregnancy. In Mus musculus (Mouse), this protein is Corticotropin-releasing factor-binding protein (Crhbp).